The chain runs to 241 residues: UPF0280 protein MK0206 (241 aa).

The protein belongs to the UPF0280 family.

This is UPF0280 protein MK0206 from Methanopyrus kandleri (strain AV19 / DSM 6324 / JCM 9639 / NBRC 100938).